A 282-amino-acid polypeptide reads, in one-letter code: Elongation factor Ts (282 aa).

An involved in Mg(2+) ion dislocation from EF-Tu region spans residues 79 to 82 (TDFV).

Belongs to the EF-Ts family.

It is found in the cytoplasm. Functionally, associates with the EF-Tu.GDP complex and induces the exchange of GDP to GTP. It remains bound to the aminoacyl-tRNA.EF-Tu.GTP complex up to the GTP hydrolysis stage on the ribosome. This Shewanella woodyi (strain ATCC 51908 / MS32) protein is Elongation factor Ts.